The following is a 467-amino-acid chain: 3-isopropylmalate dehydratase large subunit (467 aa).

[4Fe-4S] cluster contacts are provided by C347, C407, and C410.

This sequence belongs to the aconitase/IPM isomerase family. LeuC type 1 subfamily. Heterodimer of LeuC and LeuD. It depends on [4Fe-4S] cluster as a cofactor.

It catalyses the reaction (2R,3S)-3-isopropylmalate = (2S)-2-isopropylmalate. It participates in amino-acid biosynthesis; L-leucine biosynthesis; L-leucine from 3-methyl-2-oxobutanoate: step 2/4. Its function is as follows. Catalyzes the isomerization between 2-isopropylmalate and 3-isopropylmalate, via the formation of 2-isopropylmaleate. This Synechococcus sp. (strain JA-3-3Ab) (Cyanobacteria bacterium Yellowstone A-Prime) protein is 3-isopropylmalate dehydratase large subunit.